A 257-amino-acid polypeptide reads, in one-letter code: Nickel import system ATP-binding protein NikD (257 aa).

One can recognise an ABC transporter domain in the interval 4 to 245; sequence IDIQNLTIKN…HLHPYTERLI (242 aa). 37–44 contacts ATP; it reads GESGAGKS.

Belongs to the ABC transporter superfamily. The complex is composed of two ATP-binding proteins (NikD and NikE), two transmembrane proteins (NikB and NikC) and a solute-binding protein (NikA).

It is found in the cell membrane. The catalysed reaction is Ni(2+)(out) + ATP + H2O = Ni(2+)(in) + ADP + phosphate + H(+). Part of the ABC transporter complex NikABCDE (Opp2) involved in nickel import. Probably responsible for energy coupling to the transport system. This Staphylococcus aureus (strain MRSA252) protein is Nickel import system ATP-binding protein NikD.